Reading from the N-terminus, the 450-residue chain is Signal recognition particle protein (450 aa).

Residues 107 to 114 (GLQGVGKT), 190 to 194 (DTAGR), and 248 to 251 (TKTD) each bind GTP.

Belongs to the GTP-binding SRP family. SRP54 subfamily. Part of the signal recognition particle protein translocation system, which is composed of SRP and FtsY. SRP is a ribonucleoprotein composed of Ffh and a 4.5S RNA molecule.

It localises to the cytoplasm. It carries out the reaction GTP + H2O = GDP + phosphate + H(+). Functionally, involved in targeting and insertion of nascent membrane proteins into the cytoplasmic membrane. Binds to the hydrophobic signal sequence of the ribosome-nascent chain (RNC) as it emerges from the ribosomes. The SRP-RNC complex is then targeted to the cytoplasmic membrane where it interacts with the SRP receptor FtsY. Interaction with FtsY leads to the transfer of the RNC complex to the Sec translocase for insertion into the membrane, the hydrolysis of GTP by both Ffh and FtsY, and the dissociation of the SRP-FtsY complex into the individual components. The protein is Signal recognition particle protein of Buchnera aphidicola subsp. Schizaphis graminum (strain Sg).